The following is an 84-amino-acid chain: UPF0386 protein NGR_c10980 (84 aa).

This sequence belongs to the UPF0386 family.

The protein is UPF0386 protein NGR_c10980 of Sinorhizobium fredii (strain NBRC 101917 / NGR234).